A 534-amino-acid polypeptide reads, in one-letter code: Alkaline serine exoprotease A (534 aa).

A signal peptide spans 1-21 (MLKKLLSCCITSALCFHSSLA). Positions 22 to 141 (FSQPNEIADS…LSLDPIVSAD (120 aa)) are excised as a propeptide. Residues 57–134 (RYIVVFQQPQ…YIEQDRILSL (78 aa)) form the Inhibitor I9 domain. In terms of domain architecture, Peptidase S8 spans 148-419 (IWGLDRIDQR…KLLYSLTDAD (272 aa)). Catalysis depends on charge relay system residues Asp180, His213, and Ser363. Residues 423–442 (DCGGPDPTPDPEGKLTSGVP) are disordered.

Belongs to the peptidase S8 family.

The protein is Alkaline serine exoprotease A (proA) of Vibrio alginolyticus.